Consider the following 57-residue polypeptide: Large ribosomal subunit protein bL33 (57 aa).

Belongs to the bacterial ribosomal protein bL33 family.

This Akkermansia muciniphila (strain ATCC BAA-835 / DSM 22959 / JCM 33894 / BCRC 81048 / CCUG 64013 / CIP 107961 / Muc) protein is Large ribosomal subunit protein bL33.